A 581-amino-acid chain; its full sequence is Glutamyl-tRNA reductase (581 aa).

Substrate contacts are provided by residues Thr-49–Arg-52, Ser-109, Glu-114–Gln-116, and Gln-120. The Nucleophile role is filled by Cys-50. Gly-192–Ser-197 contributes to the NADP(+) binding site. The insert stretch occupies residues Pro-292–Leu-416.

The protein belongs to the glutamyl-tRNA reductase family. As to quaternary structure, homodimer.

The enzyme catalyses (S)-4-amino-5-oxopentanoate + tRNA(Glu) + NADP(+) = L-glutamyl-tRNA(Glu) + NADPH + H(+). Its pathway is porphyrin-containing compound metabolism; protoporphyrin-IX biosynthesis; 5-aminolevulinate from L-glutamyl-tRNA(Glu): step 1/2. Catalyzes the NADPH-dependent reduction of glutamyl-tRNA(Glu) to glutamate 1-semialdehyde (GSA). This is Glutamyl-tRNA reductase from Streptomyces coelicolor (strain ATCC BAA-471 / A3(2) / M145).